Consider the following 285-residue polypeptide: Probable endonuclease 4 (285 aa).

Zn(2+)-binding residues include His69, His109, Glu145, Asp179, His182, His216, Asp229, His231, and Glu261.

Belongs to the AP endonuclease 2 family. The cofactor is Zn(2+).

It carries out the reaction Endonucleolytic cleavage to 5'-phosphooligonucleotide end-products.. Its function is as follows. Endonuclease IV plays a role in DNA repair. It cleaves phosphodiester bonds at apurinic or apyrimidinic (AP) sites, generating a 3'-hydroxyl group and a 5'-terminal sugar phosphate. The polypeptide is Probable endonuclease 4 (Shigella dysenteriae serotype 1 (strain Sd197)).